Here is a 165-residue protein sequence, read N- to C-terminus: Protoporphyrinogen IX oxidase (165 aa).

4 helical membrane passes run 26-46, 77-97, 99-119, and 145-165; these read LHVI…RLFV, AMIA…IVDW, MLWP…HMWL, and PTLL…YWGF. H27 provides a ligand contact to heme. K105 serves as a coordination point for heme.

It belongs to the HemJ family. As to quaternary structure, homodimer. The cofactor is heme b.

The protein localises to the cell membrane. The catalysed reaction is protoporphyrinogen IX + 3 A = protoporphyrin IX + 3 AH2. It participates in porphyrin-containing compound metabolism; protoporphyrin-IX biosynthesis; protoporphyrin-IX from protoporphyrinogen-IX: step 1/1. Functionally, catalyzes the oxidation of protoporphyrinogen IX to protoporphyrin IX. Is involved in the biosynthesis of tetrapyrrole molecules like heme and chlorophyll. Does not use oxygen or artificial electron acceptors such as menadione or benzoquinone. This is Protoporphyrinogen IX oxidase from Cereibacter sphaeroides (strain ATCC 17023 / DSM 158 / JCM 6121 / CCUG 31486 / LMG 2827 / NBRC 12203 / NCIMB 8253 / ATH 2.4.1.) (Rhodobacter sphaeroides).